Here is a 151-residue protein sequence, read N- to C-terminus: 3-dehydroquinate dehydratase 1 (151 aa).

Tyr-23 acts as the Proton acceptor in catalysis. Substrate contacts are provided by Asn-75, His-81, and Asp-88. His-101 functions as the Proton donor in the catalytic mechanism. Substrate is bound by residues 102–103 and Arg-112; that span reads LS.

Belongs to the type-II 3-dehydroquinase family. Homododecamer.

The catalysed reaction is 3-dehydroquinate = 3-dehydroshikimate + H2O. It functions in the pathway metabolic intermediate biosynthesis; chorismate biosynthesis; chorismate from D-erythrose 4-phosphate and phosphoenolpyruvate: step 3/7. Functionally, catalyzes a trans-dehydration via an enolate intermediate. The chain is 3-dehydroquinate dehydratase 1 (aroQ1) from Pseudomonas putida (strain ATCC 47054 / DSM 6125 / CFBP 8728 / NCIMB 11950 / KT2440).